A 750-amino-acid polypeptide reads, in one-letter code: Photosystem I P700 chlorophyll a apoprotein A1 (750 aa).

A run of 8 helical transmembrane segments spans residues 70-93 (VFSA…FHGA), 156-179 (LYCT…FHYH), 195-219 (LNHH…HVSL), 291-309 (IAHH…GHMY), 346-369 (WHAQ…HHMY), 385-411 (LSLF…IFMV), 433-455 (AIIS…LYIH), and 531-549 (FLVH…LILL). [4Fe-4S] cluster is bound by residues cysteine 573 and cysteine 582. 2 helical membrane passes run 589-610 (HVFL…HFSW) and 664-686 (LSAY…MFLF). Position 675 (histidine 675) interacts with chlorophyll a'. Chlorophyll a contacts are provided by methionine 683 and tyrosine 691. Residue tryptophan 692 coordinates phylloquinone. The helical transmembrane segment at 724 to 744 (AVGVTHYLLGGIATTWAFFLA) threads the bilayer.

Belongs to the PsaA/PsaB family. As to quaternary structure, the PsaA/B heterodimer binds the P700 chlorophyll special pair and subsequent electron acceptors. PSI consists of a core antenna complex that captures photons, and an electron transfer chain that converts photonic excitation into a charge separation. The eukaryotic PSI reaction center is composed of at least 11 subunits. It depends on P700 is a chlorophyll a/chlorophyll a' dimer, A0 is one or more chlorophyll a, A1 is one or both phylloquinones and FX is a shared 4Fe-4S iron-sulfur center. as a cofactor.

Its subcellular location is the plastid. It is found in the chloroplast thylakoid membrane. It carries out the reaction reduced [plastocyanin] + hnu + oxidized [2Fe-2S]-[ferredoxin] = oxidized [plastocyanin] + reduced [2Fe-2S]-[ferredoxin]. Its function is as follows. PsaA and PsaB bind P700, the primary electron donor of photosystem I (PSI), as well as the electron acceptors A0, A1 and FX. PSI is a plastocyanin-ferredoxin oxidoreductase, converting photonic excitation into a charge separation, which transfers an electron from the donor P700 chlorophyll pair to the spectroscopically characterized acceptors A0, A1, FX, FA and FB in turn. Oxidized P700 is reduced on the lumenal side of the thylakoid membrane by plastocyanin. The protein is Photosystem I P700 chlorophyll a apoprotein A1 of Arabidopsis thaliana (Mouse-ear cress).